The sequence spans 164 residues: UPF0304 protein YE1336 (164 aa).

Belongs to the UPF0304 family.

The chain is UPF0304 protein YE1336 from Yersinia enterocolitica serotype O:8 / biotype 1B (strain NCTC 13174 / 8081).